Reading from the N-terminus, the 337-residue chain is Histidine N-acetyltransferase (337 aa).

The propeptide at 1–2 is removed in mature form; that stretch reads MK. The region spanning 21–156 is the N-acetyltransferase domain; it reads LQFAVATEED…QGILLVRFRA (136 aa).

The catalysed reaction is L-histidine + acetyl-CoA = N(alpha)-acetyl-L-histidine + CoA + H(+). In terms of biological role, enzyme responsible for the N-acetyl-histidine (NAH) synthesis, which is a major constituent of brain and lens of ectothermic vertebrates. The chain is Histidine N-acetyltransferase (hisat) from Scomber australasicus (Blue mackerel).